We begin with the raw amino-acid sequence, 330 residues long: MKTAYIAKQRQISFVKSHFSRQLEERLGLIEVQAPILSRVGDGTQDNLSGCEKAVQVKVKALPDAQFEVVHSLAKWKRQTLGQHDFSAGEGLYTHMKALRPDEDRLSPLHSVYVDQWDWERVMADGERQFSTLKSTVEAIWAGIKATEAAVSEEFGLAPFLPDQIHFVHSQELLSRYPNLDAKGRERAIAKDLGAVFLVGIGGKLSDGHRHDVRAPDYDDWSTPSELGYAGLNGDILVWNPVLEDAFELSSMGIRVDADTLKHQLALTGDEDRLQLEWHQALLRGEMPQTIGGGIGQSRLTMLLLQLPHIGQVQCGVWSAAVRESVPSLL.

It belongs to the class-II aminoacyl-tRNA synthetase family. AsnA subfamily.

It localises to the cytoplasm. The enzyme catalyses L-aspartate + NH4(+) + ATP = L-asparagine + AMP + diphosphate + H(+). It functions in the pathway amino-acid biosynthesis; L-asparagine biosynthesis; L-asparagine from L-aspartate (ammonia route): step 1/1. The protein is Aspartate--ammonia ligase of Escherichia coli (strain SMS-3-5 / SECEC).